A 41-amino-acid polypeptide reads, in one-letter code: Ranatuerin-2PLg (41 aa).

Residues 1–11 constitute a propeptide that is removed on maturation; it reads DDGVEMTEEEV. C36 and C41 form a disulfide bridge.

It belongs to the frog skin active peptide (FSAP) family. Ranatuerin subfamily.

Its subcellular location is the secreted. In terms of biological role, antimicrobial peptide. The polypeptide is Ranatuerin-2PLg (Lithobates palustris (Pickerel frog)).